The following is a 393-amino-acid chain: Elongation factor Tu (393 aa).

Residues 10–203 form the tr-type G domain; sequence KPHVNIGTIG…AVDAFIPDPV (194 aa). The G1 stretch occupies residues 19 to 26; sequence GHVDHGKT. A GTP-binding site is contributed by 19 to 26; sequence GHVDHGKT. T26 provides a ligand contact to Mg(2+). The G2 stretch occupies residues 60-64; that stretch reads GITIS. The interval 81–84 is G3; sequence DCPG. Residues 81 to 85 and 136 to 139 contribute to the GTP site; these read DCPGH and NKVD. Positions 136–139 are G4; it reads NKVD. Residues 173–175 are G5; sequence SAL.

This sequence belongs to the TRAFAC class translation factor GTPase superfamily. Classic translation factor GTPase family. EF-Tu/EF-1A subfamily. Monomer.

It is found in the cytoplasm. It carries out the reaction GTP + H2O = GDP + phosphate + H(+). GTP hydrolase that promotes the GTP-dependent binding of aminoacyl-tRNA to the A-site of ribosomes during protein biosynthesis. The chain is Elongation factor Tu from Chlorobium chlorochromatii (strain CaD3).